Reading from the N-terminus, the 124-residue chain is ATP synthase epsilon chain (124 aa).

This sequence belongs to the ATPase epsilon chain family. F-type ATPases have 2 components, CF(1) - the catalytic core - and CF(0) - the membrane proton channel. CF(1) has five subunits: alpha(3), beta(3), gamma(1), delta(1), epsilon(1). CF(0) has three main subunits: a, b and c.

It is found in the cell membrane. Functionally, produces ATP from ADP in the presence of a proton gradient across the membrane. In Corynebacterium efficiens (strain DSM 44549 / YS-314 / AJ 12310 / JCM 11189 / NBRC 100395), this protein is ATP synthase epsilon chain.